The sequence spans 438 residues: tRNA-dihydrouridine(16/17) synthase [NAD(P)(+)]-like (438 aa).

FMN is bound by residues 23 to 25 (PMV) and Gln-79. The Proton donor role is filled by Cys-108. Residues Lys-147, His-175, 208 to 210 (NGN), and 232 to 233 (AE) contribute to the FMN site. The segment at 343–387 (GPKEGSKENSSGRSKRALEEEEGSMEGLSKNKLKKQLRNPHKTFD) is disordered. A compositionally biased stretch (basic residues) spans 373 to 383 (NKLKKQLRNPH).

This sequence belongs to the Dus family. Dus1 subfamily. FMN is required as a cofactor.

The protein resides in the cytoplasm. It is found in the nucleus. The catalysed reaction is 5,6-dihydrouridine(16) in tRNA + NADP(+) = uridine(16) in tRNA + NADPH + H(+). It catalyses the reaction 5,6-dihydrouridine(16) in tRNA + NAD(+) = uridine(16) in tRNA + NADH + H(+). It carries out the reaction 5,6-dihydrouridine(17) in tRNA + NAD(+) = uridine(17) in tRNA + NADH + H(+). The enzyme catalyses 5,6-dihydrouridine(17) in tRNA + NADP(+) = uridine(17) in tRNA + NADPH + H(+). In terms of biological role, catalyzes the synthesis of dihydrouridine, a modified base found in the D-loop of most tRNAs. Specifically modifies U16 and U17 in cytoplasmic tRNAs. Affects the level of some mature tRNA and thereby the total cellular translation. In Rattus norvegicus (Rat), this protein is tRNA-dihydrouridine(16/17) synthase [NAD(P)(+)]-like (Dus1l).